A 141-amino-acid polypeptide reads, in one-letter code: Large ribosomal subunit protein uL16 (141 aa).

Positions 1–23 are disordered; that stretch reads MLMPKRTKYRKQMKGRNRGKAHR.

This sequence belongs to the universal ribosomal protein uL16 family. In terms of assembly, part of the 50S ribosomal subunit.

Its function is as follows. Binds 23S rRNA and is also seen to make contacts with the A and possibly P site tRNAs. The polypeptide is Large ribosomal subunit protein uL16 (Helicobacter pylori (strain P12)).